A 633-amino-acid polypeptide reads, in one-letter code: Glutamyl-tRNA(Gln) amidotransferase subunit E (633 aa).

It belongs to the GatB/GatE family. GatE subfamily. Heterodimer of GatD and GatE.

The enzyme catalyses L-glutamyl-tRNA(Gln) + L-glutamine + ATP + H2O = L-glutaminyl-tRNA(Gln) + L-glutamate + ADP + phosphate + H(+). Allows the formation of correctly charged Gln-tRNA(Gln) through the transamidation of misacylated Glu-tRNA(Gln) in organisms which lack glutaminyl-tRNA synthetase. The reaction takes place in the presence of glutamine and ATP through an activated gamma-phospho-Glu-tRNA(Gln). The GatDE system is specific for glutamate and does not act on aspartate. The polypeptide is Glutamyl-tRNA(Gln) amidotransferase subunit E (Methanococcus vannielii (strain ATCC 35089 / DSM 1224 / JCM 13029 / OCM 148 / SB)).